A 582-amino-acid chain; its full sequence is DNA mismatch repair protein MutL (582 aa).

The protein belongs to the DNA mismatch repair MutL/HexB family.

This protein is involved in the repair of mismatches in DNA. It is required for dam-dependent methyl-directed DNA mismatch repair. May act as a 'molecular matchmaker', a protein that promotes the formation of a stable complex between two or more DNA-binding proteins in an ATP-dependent manner without itself being part of a final effector complex. This is DNA mismatch repair protein MutL from Buchnera aphidicola subsp. Schizaphis graminum (strain Sg).